We begin with the raw amino-acid sequence, 533 residues long: MNTSPDRVIIFDTTLRDGEQSPGAALNVDEKLTIARALARLGVDVIEAGFPHASPGDFEAVQKIAGSVGSEADSPIICGLARATQKDIKSAADALRPAAKPRIHTFLATSDIHLQYKLKKTRQEVLEIVPEMVAYAKSFLNDVEFSPEDAGRSDPEFLYQVLERAIAAGATTVNIPDTVGYTTPSEFGALIRGIKENVPNIDQAIISVHGHDDLGLAVANFLEAVKNGARQLECTINGIGERAGNASLEELVMALHVRRSYFNPFLGRPAESTEPLTKINTKEIYRTSRLVSNLTGMIVQPNKAIVGANAFAHESGIHQDGVLKHKLTYEIMDAESIGLTNNQIVLGKLSGRNAFRSRLQELGFELSETELNNAFIQFKEMADRKKEITDRDLEAIVNDEIDTVPDHFRLELVQVSCGNNARPTATVTIRTPDGSELSDAAIGTGPVDALCKAIDRVVQIPNELISFSVREVTEGIDALGEVTIRLRYAGRTYSARAADTDIIVASARAYVSALNRLHVALQQKEKTPEMLQV.

Residues 8–270 (VIIFDTTLRD…YFNPFLGRPA (263 aa)) form the Pyruvate carboxyltransferase domain. The Mn(2+) site is built by aspartate 17, histidine 209, histidine 211, and asparagine 245. Positions 409-533 (RLELVQVSCG…KEKTPEMLQV (125 aa)) are regulatory domain.

The protein belongs to the alpha-IPM synthase/homocitrate synthase family. LeuA type 1 subfamily. Homodimer. The cofactor is Mn(2+).

The protein localises to the cytoplasm. The enzyme catalyses 3-methyl-2-oxobutanoate + acetyl-CoA + H2O = (2S)-2-isopropylmalate + CoA + H(+). It participates in amino-acid biosynthesis; L-leucine biosynthesis; L-leucine from 3-methyl-2-oxobutanoate: step 1/4. Catalyzes the condensation of the acetyl group of acetyl-CoA with 3-methyl-2-oxobutanoate (2-ketoisovalerate) to form 3-carboxy-3-hydroxy-4-methylpentanoate (2-isopropylmalate). The sequence is that of 2-isopropylmalate synthase from Microcystis aeruginosa.